Here is a 1165-residue protein sequence, read N- to C-terminus: Symplekin (1165 aa).

HEAT repeat units follow at residues 23–58 (TATA…TVLG), 61–95 (AELA…QVCK), 98–140 (VELL…YLCS), 147–186 (SAEQ…GVVV), and 218–257 (KLQE…IAKM). The interval 365–384 (DQQQREMELDTEELERQKQK) is disordered. The span at 367 to 384 (QQREMELDTEELERQKQK) shows a compositional bias: basic and acidic residues.

The protein belongs to the Symplekin family. Interacts with Cpsf73 and Cpsf100 forming a core cleavage factor required for both polyadenylated and histone mRNA processing. Interacts with Slbp and Lsm11.

Its subcellular location is the nucleus. Component of a protein complex required for cotranscriptional processing of 3'-ends of polyadenylated and histone pre-mRNA. Involved in germline stem cell transit amplification, differentiation and mitosis-to-meiosis transition. This Drosophila melanogaster (Fruit fly) protein is Symplekin.